Here is a 110-residue protein sequence, read N- to C-terminus: MDGTLFPGDDDLAIPATEFFSTKADKKPEAKREAIVKADEDDNEETLKQRLTNLEKKITNVTTKFEQIEKCCKRNDEVLFRLENHAETLRAAMISLAKKIDVQTGRRPYE.

It belongs to the orthopoxvirus OPG154 protein family. As to quaternary structure, homohexamers, covalently linked. Interacts with OPG144 and OPG153.

The protein resides in the virion. In terms of biological role, structural protein involved in the envelopment of mature virion (MV) to form the wrapped virion (WV). The wrapping consists of the addition of Golgi membranes to the mature virion. Participates in mature virion (MV) movement within the infected cell. May play an indirect role in MV-cell fusion. The protein is Protein OPG154 (OPG154) of Homo sapiens (Human).